A 274-amino-acid chain; its full sequence is MIEIKKAKPTSPGRRHVVSVKNTELHTGKPFKGLVEVKKSKAGRNNTGRITVRHQGGGHKQHYRIVDFKRNKDDITAKVERIEYDPNRSANIALVLYADGERRYIVAPKGLKKDMSVISGEKVDVAVGNCMPLRNIPLGTVIHNIEMKPKKGAQMIRSAGTFAQLVGKDNAYAIIRLRSGEMRRVLLDCRAVIGVVSNSEHNLKSLGKAGAKRWRGIRPTVRGVAMNPVDHPHGGGEGRTSGGRHPVTPWGIPTKGYKTRRNKRSNKLIVQKRK.

Residues 224-274 form a disordered region; the sequence is VAMNPVDHPHGGGEGRTSGGRHPVTPWGIPTKGYKTRRNKRSNKLIVQKRK. The span at 257-274 shows a compositional bias: basic residues; sequence YKTRRNKRSNKLIVQKRK.

It belongs to the universal ribosomal protein uL2 family. In terms of assembly, part of the 50S ribosomal subunit. Forms a bridge to the 30S subunit in the 70S ribosome.

One of the primary rRNA binding proteins. Required for association of the 30S and 50S subunits to form the 70S ribosome, for tRNA binding and peptide bond formation. It has been suggested to have peptidyltransferase activity; this is somewhat controversial. Makes several contacts with the 16S rRNA in the 70S ribosome. This Francisella tularensis subsp. tularensis (strain FSC 198) protein is Large ribosomal subunit protein uL2.